A 647-amino-acid chain; its full sequence is Exoribonuclease 2 (647 aa).

Residues 192–519 form the RNB domain; sequence RIDLTSLDFV…NHRLLKAIIQ (328 aa). Residues 564–646 form the S1 motif domain; sequence EQRFTAEIID…ETRNIVARPT (83 aa).

Belongs to the RNR ribonuclease family. RNase II subfamily.

It localises to the cytoplasm. The enzyme catalyses Exonucleolytic cleavage in the 3'- to 5'-direction to yield nucleoside 5'-phosphates.. Functionally, involved in mRNA degradation. Hydrolyzes single-stranded polyribonucleotides processively in the 3' to 5' direction. This Photorhabdus laumondii subsp. laumondii (strain DSM 15139 / CIP 105565 / TT01) (Photorhabdus luminescens subsp. laumondii) protein is Exoribonuclease 2.